A 446-amino-acid chain; its full sequence is Chromosomal replication initiator protein DnaA (446 aa).

Residues 1–81 are domain I, interacts with DnaA modulators; it reads MENIADLWNS…AKLNIRFIIP (81 aa). The segment at 81-109 is domain II; that stretch reads PQSQTEEEVDYPPAKAKKMNDESNHLPQS. The interval 110–326 is domain III, AAA+ region; that stretch reads MLNPKYTFDT…GALIRVVAYS (217 aa). Residues glycine 154, glycine 156, lysine 157, and threonine 158 each contribute to the ATP site. Residues 327 to 446 are domain IV, binds dsDNA; it reads SLINKDINAD…QIEEINDILK (120 aa).

This sequence belongs to the DnaA family. As to quaternary structure, oligomerizes as a right-handed, spiral filament on DNA at oriC.

Its subcellular location is the cytoplasm. Its function is as follows. Plays an essential role in the initiation and regulation of chromosomal replication. ATP-DnaA binds to the origin of replication (oriC) to initiate formation of the DNA replication initiation complex once per cell cycle. Binds the DnaA box (a 9 base pair repeat at the origin) and separates the double-stranded (ds)DNA. Forms a right-handed helical filament on oriC DNA; dsDNA binds to the exterior of the filament while single-stranded (ss)DNA is stabiized in the filament's interior. The ATP-DnaA-oriC complex binds and stabilizes one strand of the AT-rich DNA unwinding element (DUE), permitting loading of DNA polymerase. After initiation quickly degrades to an ADP-DnaA complex that is not apt for DNA replication. Binds acidic phospholipids. The protein is Chromosomal replication initiator protein DnaA of Bacillus cytotoxicus (strain DSM 22905 / CIP 110041 / 391-98 / NVH 391-98).